The primary structure comprises 133 residues: Ribosome-binding factor A (133 aa).

It belongs to the RbfA family. As to quaternary structure, monomer. Binds 30S ribosomal subunits, but not 50S ribosomal subunits or 70S ribosomes.

The protein resides in the cytoplasm. Functionally, one of several proteins that assist in the late maturation steps of the functional core of the 30S ribosomal subunit. Associates with free 30S ribosomal subunits (but not with 30S subunits that are part of 70S ribosomes or polysomes). Required for efficient processing of 16S rRNA. May interact with the 5'-terminal helix region of 16S rRNA. This chain is Ribosome-binding factor A, found in Pseudomonas fluorescens (strain ATCC BAA-477 / NRRL B-23932 / Pf-5).